A 212-amino-acid polypeptide reads, in one-letter code: uncharacterized protein (212 aa).

Disordered stretches follow at residues 1–148 (MEKD…LNDL) and 168–190 (EVVT…LSED). Basic and acidic residues predominate over residues 61 to 70 (KELESEDQGK). The segment covering 71–85 (DPSSNAEDASCQKNL) has biased composition (polar residues). Basic and acidic residues-rich tracts occupy residues 99–115 (LGHE…KSDL), 124–144 (EGEH…ESIK), and 168–180 (EVVT…EKPS).

This is an uncharacterized protein from Homo sapiens (Human).